Here is a 182-residue protein sequence, read N- to C-terminus: Protein Syd (182 aa).

The protein belongs to the Syd family.

The protein resides in the cell inner membrane. Interacts with the SecY protein in vivo. May bind preferentially to an uncomplexed state of SecY, thus functioning either as a chelating agent for excess SecY in the cell or as a regulatory factor that negatively controls the translocase function. This Pectobacterium atrosepticum (strain SCRI 1043 / ATCC BAA-672) (Erwinia carotovora subsp. atroseptica) protein is Protein Syd.